A 315-amino-acid polypeptide reads, in one-letter code: NADH-ubiquinone oxidoreductase chain 1 (315 aa).

A run of 8 helical transmembrane segments spans residues 6–26 (FILSLIGSLLLIICVLVSVAF), 80–100 (ISPIFSLFLSLFVWMCMPFFV), 107–127 (LGGLFFLCCTSLGVYTVMIAG), 153–173 (LALILLSFVFLIGSYNMMYFF), 177–197 (IYIWFLIILFPMALVWLTISL), 229–249 (LIFMAEYASILFMSMLFCVIF), 253–273 (DVFNLLFYVKLTFISFVFIWA), and 292–312 (CFLSFSLNYLLFFIGFKILLF).

The protein belongs to the complex I subunit 1 family.

The protein localises to the mitochondrion inner membrane. The enzyme catalyses a ubiquinone + NADH + 5 H(+)(in) = a ubiquinol + NAD(+) + 4 H(+)(out). Functionally, core subunit of the mitochondrial membrane respiratory chain NADH dehydrogenase (Complex I) that is believed to belong to the minimal assembly required for catalysis. Complex I functions in the transfer of electrons from NADH to the respiratory chain. The immediate electron acceptor for the enzyme is believed to be ubiquinone. This Drosophila persimilis (Fruit fly) protein is NADH-ubiquinone oxidoreductase chain 1 (mt:ND1).